The sequence spans 341 residues: Annexin A1 isoform p35 (341 aa).

Annexin repeat units follow at residues 37–108, 109–180, 192–263, and 267–338; these read FDPS…ALLK, TPAQ…SLAK, ELAE…ALVK, and SKPA…ALCG.

It belongs to the annexin family. In terms of processing, in contrast to mammalian homologs, does not contain a tyrosine phosphorylation site in the N-terminal part.

The protein localises to the nucleus. The protein resides in the cytoplasm. Its subcellular location is the cell projection. It is found in the cilium. It localises to the basolateral cell membrane. Calcium/phospholipid-binding protein which promotes membrane fusion and is involved in exocytosis. This protein regulates phospholipase A2 activity. It seems to bind from two to four calcium ions with high affinity. This is Annexin A1 isoform p35 (CP35) from Columba livia (Rock dove).